The chain runs to 222 residues: UPF0758 protein YicR (222 aa).

One can recognise an MPN domain in the interval 100–222 (PLLSPEMTRE…YVSFAERGWI (123 aa)). Residues His171, His173, and Asp184 each coordinate Zn(2+). The short motif at 171-184 (HNHPSGCAEPSKAD) is the JAMM motif element.

Belongs to the UPF0758 family. YicR subfamily.

In Escherichia coli O45:K1 (strain S88 / ExPEC), this protein is UPF0758 protein YicR.